The sequence spans 361 residues: Uroporphyrinogen decarboxylase (361 aa).

Substrate is bound by residues 27–31 (RQAGR), Asp-77, Tyr-154, Thr-209, and His-327.

The protein belongs to the uroporphyrinogen decarboxylase family. As to quaternary structure, homodimer.

The protein localises to the cytoplasm. The enzyme catalyses uroporphyrinogen III + 4 H(+) = coproporphyrinogen III + 4 CO2. It functions in the pathway porphyrin-containing compound metabolism; protoporphyrin-IX biosynthesis; coproporphyrinogen-III from 5-aminolevulinate: step 4/4. Its function is as follows. Catalyzes the decarboxylation of four acetate groups of uroporphyrinogen-III to yield coproporphyrinogen-III. In Coxiella burnetii (strain Dugway 5J108-111), this protein is Uroporphyrinogen decarboxylase.